We begin with the raw amino-acid sequence, 131 residues long: Fumarate reductase subunit C (131 aa).

3 helical membrane passes run 30–50, 57–77, and 109–129; these read EGTAVPAVWFSIELIFGLFAL, WMGFVGFLQNPVVVILNLITL, and IIKGLWVVTAVVTVVILYVAL.

It belongs to the FrdC family. As to quaternary structure, part of an enzyme complex containing four subunits: a flavoprotein (FrdA), an iron-sulfur protein (FrdB), and two hydrophobic anchor proteins (FrdC and FrdD).

It localises to the cell inner membrane. Two distinct, membrane-bound, FAD-containing enzymes are responsible for the catalysis of fumarate and succinate interconversion; fumarate reductase is used in anaerobic growth, and succinate dehydrogenase is used in aerobic growth. Anchors the catalytic components of the fumarate reductase complex to the cell inner membrane, binds quinones. The polypeptide is Fumarate reductase subunit C (Salmonella choleraesuis (strain SC-B67)).